We begin with the raw amino-acid sequence, 107 residues long: MPRKRLTGIVVSDKMDKTVVVAVEKLVQHPIYKKYVKRTKKYHAHDERNECKIGDVVEIEETRPLSKTKRWRVVRIIQRFEPERVLKEEEDIQEEIEAVEGKGGVES.

Belongs to the universal ribosomal protein uS17 family. In terms of assembly, part of the 30S ribosomal subunit.

Functionally, one of the primary rRNA binding proteins, it binds specifically to the 5'-end of 16S ribosomal RNA. The chain is Small ribosomal subunit protein uS17 from Thermotoga petrophila (strain ATCC BAA-488 / DSM 13995 / JCM 10881 / RKU-1).